Reading from the N-terminus, the 468-residue chain is MKKTLYEKLFDAHVVHEAEGETPLIYINRHLVHEVTSPQAFDGLRAMGREVRQPTKTVATMDHNVPTDSRDLGGSGEMGRIQMVELAKNTEQFGVTLYDINHINQGIVHVMGPEQGLTLPGMTIVCGDSHTATHGAFGALAFGIGTSEVEHVLATQTVKQARAKKMKIEVRGKVREGITAKDIVLAIIGKTTMAGGTGHVVEFCGEAIRDLSMEGRMTVCNMAIELGAKSGLIAPDETTFAYLKDRPSAPKGKDWDDAVAYWKTLHTDEGAEFDTVVTLEASEIEPQVTWGTNPGHVIGINETIPNPADMADPIERQSAEKALAYMGLPHSIKLTDVAIDKVFIGSCTNSRIEDLRAAAAVAKGRKVADGVQALVVPGSGLVREQAEKEGLDKIFIEAGFEWRQPGCSMCLAMNNDRLEPGERCASTSNRNFEGRQGRGGRTHLVSPAMAAAAAVHGKFVDIRNVELH.

[4Fe-4S] cluster contacts are provided by C347, C407, and C410.

Belongs to the aconitase/IPM isomerase family. LeuC type 1 subfamily. Heterodimer of LeuC and LeuD. The cofactor is [4Fe-4S] cluster.

The enzyme catalyses (2R,3S)-3-isopropylmalate = (2S)-2-isopropylmalate. It participates in amino-acid biosynthesis; L-leucine biosynthesis; L-leucine from 3-methyl-2-oxobutanoate: step 2/4. Its function is as follows. Catalyzes the isomerization between 2-isopropylmalate and 3-isopropylmalate, via the formation of 2-isopropylmaleate. The protein is 3-isopropylmalate dehydratase large subunit of Glaesserella parasuis serovar 5 (strain SH0165) (Haemophilus parasuis).